Here is a 204-residue protein sequence, read N- to C-terminus: dITP/XTP pyrophosphatase (204 aa).

Position 11–16 (S11–K16) interacts with substrate. D76 functions as the Proton acceptor in the catalytic mechanism. D76 is a Mg(2+) binding site. Substrate contacts are provided by residues S77, F158–D161, K181, and H186–R187.

Belongs to the HAM1 NTPase family. In terms of assembly, homodimer. Mg(2+) serves as cofactor.

It carries out the reaction XTP + H2O = XMP + diphosphate + H(+). The enzyme catalyses dITP + H2O = dIMP + diphosphate + H(+). The catalysed reaction is ITP + H2O = IMP + diphosphate + H(+). Functionally, pyrophosphatase that catalyzes the hydrolysis of nucleoside triphosphates to their monophosphate derivatives, with a high preference for the non-canonical purine nucleotides XTP (xanthosine triphosphate), dITP (deoxyinosine triphosphate) and ITP. Seems to function as a house-cleaning enzyme that removes non-canonical purine nucleotides from the nucleotide pool, thus preventing their incorporation into DNA/RNA and avoiding chromosomal lesions. The polypeptide is dITP/XTP pyrophosphatase (Mycobacterium tuberculosis (strain CDC 1551 / Oshkosh)).